We begin with the raw amino-acid sequence, 451 residues long: UDP-glucosyltransferase 74AE2 (451 aa).

H17 (proton acceptor) is an active-site residue. H17 contributes to the an anthocyanidin binding site. The active-site Charge relay is D108. Positions 130, 330, 345, 348, 349, 350, 353, 369, and 370 each coordinate UDP-alpha-D-glucose.

Belongs to the UDP-glycosyltransferase family. In terms of tissue distribution, expressed at higher levels in roots than in leaves.

The catalysed reaction is (20S)-ginsenoside C-K + UDP-alpha-D-glucose = (20S)-ginsenoside F2 + UDP + H(+). The enzyme catalyses (20S)-protopanaxadiol + UDP-alpha-D-glucose = (20S)-ginsenoside Rh2 + UDP + H(+). The protein operates within secondary metabolite biosynthesis; terpenoid biosynthesis. Its function is as follows. Component of the dammarane-type triterpene saponins (e.g. PPD-type ginsenosides or panaxosides) biosynthetic pathway. Glycosyltransferase that catalyzes the biosynthesis of ginsenoside Rh2 from protopanaxadiol (PPD) and the conversion of compound K to ginsenoside F2. This chain is UDP-glucosyltransferase 74AE2, found in Panax ginseng (Korean ginseng).